A 117-amino-acid polypeptide reads, in one-letter code: uncharacterized protein (117 aa).

This is an uncharacterized protein from Homo sapiens (Human).